The sequence spans 2227 residues: Genome polyprotein (2227 aa).

2 consecutive short sequence motifs ((L)YPX(n)L motif) follow at residues 167–171 (YPHGL) and 200–205 (YPVWEL). The tract at residues 766–836 (MMSRIAAGDL…PRKMKGLFSQ (71 aa)) is involved in P1-2A pentamerization. Residues 1011-1031 (TVEIINTVLCFVKSGILLYVI) form a helical membrane-spanning segment. The segment at 1043-1070 (IGLLRVMNYADIGCSVISCGKVFSKMLE) is membrane-penetrating ability. The region spanning 1204-1366 (HQKLKNLGSI…SFFKNPHNDM (163 aa)) is the SF3 helicase domain. ATP is bound at residue 1230-1237 (GKRGGGKS). The chain crosses the membrane as a helical span at residues 1462–1482 (WVAVGAAVGILGVLVGGWFVY). An O-(5'-phospho-RNA)-tyrosine modification is found at tyrosine 1499. The 215-residue stretch at 1514–1728 (DPVESQSTLE…VAKLVTQEMF (215 aa)) folds into the Peptidase C3 domain. Active-site for protease 3C activity residues include histidine 1563, aspartate 1603, and cysteine 1691. The 122-residue stretch at 1976 to 2097 (DVGLDLDFSA…VFSRDVQIDN (122 aa)) folds into the RdRp catalytic domain.

It belongs to the picornaviridae polyprotein family. Homodimer. Homomultimer; probably interacts with membranes in a multimeric form. Seems to assemble into amyloid-like fibers. In terms of assembly, interacts with host ACBD3. As to quaternary structure, homodimer. Monomer. Interacts with protein 3CD. Interacts with protein 3AB. In terms of assembly, interacts with human MAVS. As to quaternary structure, homodimer; disulfide-linked. Homopentamer. Homooligomer. In terms of assembly, interacts with capsid protein VP2. Interacts with capsid protein VP3. As to quaternary structure, interacts with capsid protein VP1. Interacts with capsid protein VP3. Interacts with capsid protein VP1. Interacts with capsid protein VP2. In terms of processing, specific enzymatic cleavages by viral protease in vivo yield a variety of precursors and mature proteins. Polyprotein processing intermediates are produced, such as P1-2A which is a functional precursor of the structural proteins, VP0 which is a VP4-VP2 precursor, VP1-2A precursor, 3ABC precursor which is a stable and catalytically active precursor of 3A, 3B and 3C proteins, 3AB and 3CD precursors. The assembly signal 2A is removed from VP1-2A by a host protease, possibly host Cathepsin L. This cleavage occurs over a region of 3 amino-acids probably generating VP1 proteins with heterogeneous C-termini. Post-translationally, during virion maturation, immature virions are rendered infectious following cleavage of VP0 into VP4 and VP2. This maturation seems to be an autocatalytic event triggered by the presence of RNA in the capsid and is followed by a conformational change of the particle. The assembly signal 2A is removed from VP1-2A by a host protease, possibly host Cathepsin L in naked virions. This cleavage does not occur in enveloped virions. This cleavage occurs over a region of 3 amino-acids probably generating VP1 proteins with heterogeneous C-termini. In terms of processing, VPg is uridylylated prior to priming replication into VPg-pUpU. Post-translationally, unlike other picornaviruses, does not seem to be myristoylated.

The protein resides in the virion. The protein localises to the host endosome. Its subcellular location is the host multivesicular body. It is found in the host membrane. It localises to the host mitochondrion outer membrane. The protein resides in the host cytoplasm. The protein localises to the host cytoplasmic vesicle membrane. It carries out the reaction RNA(n) + a ribonucleoside 5'-triphosphate = RNA(n+1) + diphosphate. It catalyses the reaction a ribonucleoside 5'-triphosphate + H2O = a ribonucleoside 5'-diphosphate + phosphate + H(+). The catalysed reaction is Selective cleavage of Gln-|-Gly bond in the poliovirus polyprotein. In other picornavirus reactions Glu may be substituted for Gln, and Ser or Thr for Gly.. In terms of biological role, capsid proteins VP1, VP2, and VP3 form a closed capsid enclosing the viral positive strand RNA genome. All these proteins contain a beta-sheet structure called beta-barrel jelly roll. Together they form an icosahedral capsid (T=3) composed of 60 copies of each VP1, VP2, and VP3, with a diameter of approximately 300 Angstroms. VP1 is situated at the 12 fivefold axes, whereas VP2 and VP3 are located at the quasi-sixfold axes. The naked capsid interacts with the host receptor HAVCR1 to provide virion attachment to and probably entry into the target cell. Its function is as follows. VP0 precursor is a component of the immature procapsids. Functionally, plays a role in the assembly of the 12 pentamers into an icosahedral structure. Has not been detected in mature virions, supposedly owing to its small size. Precursor component of immature procapsids that corresponds to an extended form of the structural protein VP1. After maturation, possibly by the host Cathepsin L, the assembly signal 2A is cleaved to give rise to the mature VP1 protein. In terms of biological role, functions as a viroporin. Affects membrane integrity and causes an increase in membrane permeability. Involved in host intracellular membrane rearrangements probably to give rise to the viral factories. Does not disrupt calcium homeostasis or glycoprotein trafficking. Antagonizes the innate immune response of the host by suppressing IFN-beta synthesis, which it achieves by interfering with the RIG-I/IFIH1 pathway. Its function is as follows. Affects membrane integrity and causes an increase in membrane permeability. Functionally, associates with and induces structural rearrangements of intracellular membranes. Displays RNA-binding activity. The precursor 3ABC is targeted to the mitochondrial membrane where protease 3C activity cleaves and inhibits the host antiviral protein MAVS, thereby disrupting activation of IRF3 through the IFIH1/MDA5 pathway. In vivo, the protease activity of 3ABC precursor is more efficient in cleaving the 2BC precursor than that of protein 3C. The 3ABC precursor may therefore play a role in the proteolytic processing of the polyprotein. In terms of biological role, interacts with the 3CD precursor and with RNA structures found at both the 5'- and 3'-termini of the viral genome. Since the 3AB precursor contains the hydrophobic domain 3A, it probably anchors the whole viral replicase complex to intracellular membranes on which viral RNA synthesis occurs. Its function is as follows. May serve as membrane anchor to the 3AB and 3ABC precursors via its hydrophobic domain. May interact with RNA. Functionally, acts as a primer for viral RNA replication and remains covalently bound to viral genomic RNA. VPg is uridylylated prior to priming replication into VPg-pUpU. The VPg-pUpU is then used as primer on the genomic RNA poly(A) by the RNA-dependent RNA polymerase to replicate the viral genome. Cysteine protease that generates mature viral proteins from the precursor polyprotein. In addition to its proteolytic activity, it binds to viral RNA, and thus influences viral genome replication. RNA and substrate bind cooperatively to the protease. Cleaves IKBKG/NEMO to impair innate immune signaling. Cleaves host PABPC1 which may participate in the switch of viral translation to RNA synthesis. In terms of biological role, interacts with the 3AB precursor and with RNA structures found at both the 5'- and 3'-termini of the viral genome. Disrupts TLR3 signaling by degrading the host adapter protein TICAM1/TRIF. Its function is as follows. RNA-directed RNA polymerase 3D-POL replicates genomic and antigenomic RNA by recognizing replications specific signals. The sequence is that of Genome polyprotein from Human hepatitis A virus genotype IB (isolate HM175) (HHAV).